We begin with the raw amino-acid sequence, 326 residues long: Phenylserine dehydratase (326 aa).

As to quaternary structure, monomer. Pyridoxal 5'-phosphate is required as a cofactor.

The catalysed reaction is L-threo-3-phenylserine = 3-phenylpyruvate + NH4(+). Inhibited by phenylhydrazine, hydroxylamine, p-chloromercuribenzoate, and HgCl(2). This is Phenylserine dehydratase from Ralstonia pickettii (Burkholderia pickettii).